We begin with the raw amino-acid sequence, 858 residues long: MSVVGLDVGSQSCYIAVARAGGIETIANEFSDRCTPSVISFGSKNRTIGVAAKNQQITHANNTVSNFKRFHGRAFNDPFIQKEKENLSYDLVPLKNGGVGIKVMYMGEEHLFSVEQITAMLLTKLKETAENSLKKPVTDCVISVPSFFTDAERRSVLDAAQIVGLNCLRLMNDMTAVALNYGIYKQDLPSLDEKPRIVVFVDMGHSAFQVSACAFNKGKLKVLGTAFDPFLGGKNFDEKLVEHFCAEFKTKYKLDAKSKIRALLRLYQECEKLKKLMSSNSTDLPLNIECFMNDKDVSGKMNRSQFEELCAELLQKIEVPLYSLLEQTHLKVEDVSAVEIVGGATRIPAVKERIAKFFGKDISTTLNADEAVARGCALQCAILSPAFKVREFSVTDAVPFPISLIWNHDSEDTEGVHEVFSRNHAAPFSKVLTFLRRGPFELEAFYSDPQGVPYPEAKIGRFVVQNVSAQKDGEKSRVKVKVRVNTHGIFTISTASMVEKVPTEENEMSSEADMECLNQRPPENPDTDKNVQQDNSEAGTQPQVQTDAQQTSQSPPSPELTSEENKIPDADKANEKKVDQPPEAKKPKIKVVNVELPIEANLVWQLGKDLLNMYIETEGKMIMQDKLEKERNDAKNAVEEYVYEFRDKLCGPYEKFICEQDHQNFLRLLTETEDWLYEEGEDQAKQAYVDKLEELMKIGTPVKVRFQEAEERPKMFEELGQRLQHYAKIAADFRNKDEKYNHIDESEMKKVEKSVNEVMEWMNNVMNAQAKKSLDQDPVVRAQEIKTKIKELNNTCEPVVTQPKPKIESPKLERTPNGPNIDKKEEDLEDKNNFGAEPPHQNGECYPNEKNSVNMDLD.

Ser-2 is modified (N-acetylserine). N6-acetyllysine is present on Lys-471. 2 disordered regions span residues 500–584 (KVPT…PPEA) and 796–858 (CEPV…MDLD). Over residues 504 to 514 (EENEMSSEADM) the composition is skewed to acidic residues. Ser-509 and Ser-510 each carry phosphoserine. Positions 532 to 554 (QQDNSEAGTQPQVQTDAQQTSQS) are enriched in polar residues. Ser-557 carries the phosphoserine modification. Thr-561 bears the Phosphothreonine mark. 2 stretches are compositionally biased toward basic and acidic residues: residues 563–584 (EENKIPDADKANEKKVDQPPEA) and 805–814 (PKIESPKLER). At Ser-809 the chain carries Phosphoserine. Thr-815 bears the Phosphothreonine mark. Basic and acidic residues predominate over residues 821–832 (IDKKEEDLEDKN). Residues 849–858 (EKNSVNMDLD) show a composition bias toward polar residues.

This sequence belongs to the heat shock protein 70 family. As to quaternary structure, interacts with HSPA8/HSC70. Interacts with HSPA1A (via NBD) and HSPA1B (via NBD). Phosphorylation on Ser-509 may be important for regulation of the HSPA8/HSC70 chaperone activity. Highly expressed in testis. Present at lower levels in most brain regions, except cerebellum. Overexpressed in cancer cells.

It is found in the cytoplasm. Its function is as follows. Acts as a nucleotide-exchange factor (NEF) for chaperone proteins HSPA1A and HSPA1B, promoting the release of ADP from HSPA1A/B thereby triggering client/substrate protein release. Prevents the aggregation of denatured proteins in cells under severe stress, on which the ATP levels decrease markedly. Inhibits HSPA8/HSC70 ATPase and chaperone activities. This chain is Heat shock protein 105 kDa (HSPH1), found in Homo sapiens (Human).